A 439-amino-acid chain; its full sequence is ATP-dependent RNA helicase SrmB (439 aa).

Residues S4–M32 carry the Q motif motif. In terms of domain architecture, Helicase ATP-binding spans I35–K209. A48–T55 contributes to the ATP binding site. The DEAD box signature appears at D157–D160. The Helicase C-terminal domain maps to K237 to K387. Residues P381–S393 are compositionally biased toward basic and acidic residues. Residues P381–V439 form a disordered region. Composition is skewed to basic residues over residues V394–K403 and T412–V439.

This sequence belongs to the DEAD box helicase family. SrmB subfamily. In terms of assembly, interacts with the 50S ribosomal subunit.

Its subcellular location is the cytoplasm. It carries out the reaction ATP + H2O = ADP + phosphate + H(+). Its function is as follows. DEAD-box RNA helicase involved in the assembly of the 50S ribosomal subunit at low temperature. Exhibits RNA-stimulated ATP hydrolysis and RNA unwinding activity. The chain is ATP-dependent RNA helicase SrmB from Haemophilus influenzae (strain ATCC 51907 / DSM 11121 / KW20 / Rd).